The primary structure comprises 213 residues: Cytidylate kinase (213 aa).

9–17 (GPAASGKGT) lines the ATP pocket.

Belongs to the cytidylate kinase family. Type 1 subfamily.

The protein resides in the cytoplasm. It catalyses the reaction CMP + ATP = CDP + ADP. It carries out the reaction dCMP + ATP = dCDP + ADP. The chain is Cytidylate kinase from Caulobacter vibrioides (strain ATCC 19089 / CIP 103742 / CB 15) (Caulobacter crescentus).